A 704-amino-acid chain; its full sequence is G-protein coupled receptor-associated protein LMBRD2B (704 aa).

The Extracellular segment spans residues 1–3 (MSG). A helical membrane pass occupies residues 4 to 21 (AALGIEIVVVFFLALFLL). Over 22-33 (HRYGDFKKQQRM) the chain is Cytoplasmic. A helical transmembrane segment spans residues 34 to 54 (VLFGTLLAWYLCFLIVFILPL). The Extracellular portion of the chain corresponds to 55–111 (DVSTTIYNQCLIDQEAQTQTPSVSPVLSEQTTANASISPAKSTQRVCYKPWSYIPDG). Asn88 is a glycosylation site (N-linked (GlcNAc...) asparagine). Residues 112–132 (IMPVFWRVVYWTSQCLTWLLL) form a helical membrane-spanning segment. Over 133–157 (PFMQSYARSGGFTITGKIKTALIEN) the chain is Cytoplasmic. Residues 158–178 (AIYYGTYLFIFGSLLIYVAVH) form a helical membrane-spanning segment. The Extracellular portion of the chain corresponds to 179–192 (PQWHLSWYELQTIG). The chain crosses the membrane as a helical span at residues 193 to 213 (ITAANTWGLFLLVLLLGYGLV). At 214–393 (DIPRSYWEAS…ECLLKQWFYR (180 aa)) the chain is on the cytoplasmic side. Residues 235 to 266 (KAAKLMTEKADSEENLEDVMEEVRKINESIKY) are a coiled coil. Residues 394-414 (VLAVVLALFSVAVVWSECTFF) traverse the membrane as a helical segment. At 415–438 (STHPVLSLFAVFIQLAERDYNYLY) the chain is on the extracellular side. The helical transmembrane segment at 439 to 459 (IEMACFITIFFLCTCVYSTVF) threads the bilayer. Residues 460 to 481 (RIRVFNYYYLASHHQTDAYSLQ) are Cytoplasmic-facing. A helical membrane pass occupies residues 482–502 (FSGMLFCRLTPPLCLNFLGLI). Over 503 to 527 (HMDSAISHQAKKQTAYTSIMGSMRV) the chain is Extracellular. Residues 528 to 548 (LSFIANGFYIYYPMLIVVLCI) form a helical membrane-spanning segment. Residues 549 to 704 (ATYFSLGTRC…SSRNRIFDDV (156 aa)) lie on the Cytoplasmic side of the membrane. Positions 576–612 (DLIDEGRELLRRERRKRQRIEDGENRRREWRERYAQR) form a coiled coil. Disordered regions lie at residues 613-654 (DENA…QSGR) and 672-704 (TLTDDPLQSDTGRHAGGRYLSMSSSRNRIFDDV). Positions 631-654 (YGETLNANTNRQAKYTRSGSQSGR) are enriched in polar residues.

This sequence belongs to the LIMR family.

The protein resides in the cell membrane. Functionally, may associate with G-protein coupled receptors and regulate downstream signaling pathways. This chain is G-protein coupled receptor-associated protein LMBRD2B (lmbrd2b), found in Danio rerio (Zebrafish).